A 142-amino-acid polypeptide reads, in one-letter code: Large ribosomal subunit protein uL11 (142 aa).

Belongs to the universal ribosomal protein uL11 family. Part of the ribosomal stalk of the 50S ribosomal subunit. Interacts with L10 and the large rRNA to form the base of the stalk. L10 forms an elongated spine to which L12 dimers bind in a sequential fashion forming a multimeric L10(L12)X complex. In terms of processing, one or more lysine residues are methylated.

In terms of biological role, forms part of the ribosomal stalk which helps the ribosome interact with GTP-bound translation factors. The protein is Large ribosomal subunit protein uL11 of Mycoplasma capricolum subsp. capricolum (strain California kid / ATCC 27343 / NCTC 10154).